Here is a 476-residue protein sequence, read N- to C-terminus: MGIFDYKNLGTEGSKTLFADAMAITLYSYHNLDNGFAVGYQHNGLGLGLPATLVGALLGSTDSQGVIPGIPWNPDSEKAALEAVQKAGWTPISASALGYAGKVDARGTFFGEKAGYTTAQVEVLGKYDDAGKLLEIGIGFRGTSGPRETLISDSIGDLISDLLAALGPKDYAKNYAGEAFGGLLKNVADYAGAHGLTGKDVVVSGHSLGGLAVNSMADLSNYKWAGFYKDANYVAYASPTQSAGDKVLNIGYENDPVFRALDGSSFNLSSLGVHDKPHESTTDNIVSFNDHYASTLWNVLPFSIVNLPTWVSHLPTAYGDGMTRILESGFYDQMTRDSTVIVANLSDPARANTWVQDLNRNAEPHKGNTFIIGSDGNDLIQGGNGADFIEGGKGNDTIRDNSGHNTFLFSGHFGNDRVIGYQPTDKLVFKDVQGSTDLRDHAKVVGADTVLTFGADSVTLVGVGHGGLWTEGVVIG.

Positions Met1–Ala23 are cleaved as a signal peptide. Ser207 (charge relay system) is an active-site residue. Hemolysin-type calcium-binding repeat units lie at residues Ile372 to Ile389, Glu390 to Phe407, and Ser410 to Leu427. Residues Asp437, Asp440, and Asp448 each contribute to the Ca(2+) site.

Belongs to the AB hydrolase superfamily. Lipase family.

It catalyses the reaction a triacylglycerol + H2O = a diacylglycerol + a fatty acid + H(+). In Pseudomonas fluorescens, this protein is Lipase.